A 152-amino-acid polypeptide reads, in one-letter code: Ribosomal RNA large subunit methyltransferase H (152 aa).

Residues Leu70, Gly102, and 120 to 125 (LSPMTF) contribute to the S-adenosyl-L-methionine site.

The protein belongs to the RNA methyltransferase RlmH family. As to quaternary structure, homodimer.

Its subcellular location is the cytoplasm. The catalysed reaction is pseudouridine(1915) in 23S rRNA + S-adenosyl-L-methionine = N(3)-methylpseudouridine(1915) in 23S rRNA + S-adenosyl-L-homocysteine + H(+). Functionally, specifically methylates the pseudouridine at position 1915 (m3Psi1915) in 23S rRNA. The polypeptide is Ribosomal RNA large subunit methyltransferase H (Pelobacter propionicus (strain DSM 2379 / NBRC 103807 / OttBd1)).